The primary structure comprises 348 residues: tRNA N6-adenosine threonylcarbamoyltransferase (348 aa).

Fe cation contacts are provided by histidine 115 and histidine 119. Residues 137 to 141 (LASGG), aspartate 170, glycine 183, and asparagine 281 each bind substrate. Residue aspartate 309 coordinates Fe cation.

This sequence belongs to the KAE1 / TsaD family. It depends on Fe(2+) as a cofactor.

Its subcellular location is the cytoplasm. It carries out the reaction L-threonylcarbamoyladenylate + adenosine(37) in tRNA = N(6)-L-threonylcarbamoyladenosine(37) in tRNA + AMP + H(+). Functionally, required for the formation of a threonylcarbamoyl group on adenosine at position 37 (t(6)A37) in tRNAs that read codons beginning with adenine. Is involved in the transfer of the threonylcarbamoyl moiety of threonylcarbamoyl-AMP (TC-AMP) to the N6 group of A37, together with TsaE and TsaB. TsaD likely plays a direct catalytic role in this reaction. In Methylobacterium sp. (strain 4-46), this protein is tRNA N6-adenosine threonylcarbamoyltransferase.